A 261-amino-acid chain; its full sequence is Large ribosomal subunit protein uL10m (261 aa).

The N-terminal 28 residues, 1 to 28 (MAAAVAGMLRGGLLPQAGRLPTLQTVRY), are a transit peptide targeting the mitochondrion. The tract at residues 242–261 (EKDSVMSANGKPDPDTVPDS) is disordered.

The protein belongs to the universal ribosomal protein uL10 family. As to quaternary structure, component of the mitochondrial large ribosomal subunit (mt-LSU). Mature mammalian 55S mitochondrial ribosomes consist of a small (28S) and a large (39S) subunit. The 28S small subunit contains a 12S ribosomal RNA (12S mt-rRNA) and 30 different proteins. The 39S large subunit contains a 16S rRNA (16S mt-rRNA), a copy of mitochondrial valine transfer RNA (mt-tRNA(Val)), which plays an integral structural role, and 52 different proteins. uL10m contributes a single cysteine residue to a zinc-binding site with mL66.

The protein resides in the mitochondrion. This is Large ribosomal subunit protein uL10m (MRPL10) from Homo sapiens (Human).